The chain runs to 295 residues: MTAHPETPRLGYIGLGNQGAPMAKRLLDWPGGLTVFDVRVEAMAPFVEGGATAAASVSDVAEADIISITVFDDAQVSSVITADNGLATHAKPGTIVAIHSTIADTTAVDLAEKLKPQGIHIVDAPVSGGAAAAAKGELAVMVGADDEAFQRIKEPFSRWASLLIHAGEPGAGTRMKLARNMLTFVSYAAAAEAQRLAEACGLDLVALGKVVRHSDSFTGGAGAIMFRNTTAPMEPADPLRPLLEHTRGLGEKDLSLALALGEVVSVDLPLAQLALQRLAAGLGVPHPDTEPAKET.

Residues 11–25 and T101 contribute to the NAD(+) site; that span reads GYIG…MAKR. Residue K176 is part of the active site. K252 contacts NAD(+).

This sequence belongs to the HIBADH-related family.

This is an uncharacterized protein from Mycobacterium tuberculosis (strain CDC 1551 / Oshkosh).